The sequence spans 60 residues: Large ribosomal subunit protein uL30 (60 aa).

The protein belongs to the universal ribosomal protein uL30 family. In terms of assembly, part of the 50S ribosomal subunit.

The polypeptide is Large ribosomal subunit protein uL30 (Finegoldia magna (strain ATCC 29328 / DSM 20472 / WAL 2508) (Peptostreptococcus magnus)).